A 493-amino-acid polypeptide reads, in one-letter code: BICD family-like cargo adapter 2 (493 aa).

2 coiled-coil regions span residues 56 to 275 and 365 to 431; these read ELGK…ELHM and MQHV…LLST.

Belongs to the BICDR family.

The protein is BICD family-like cargo adapter 2 (bicdl2) of Xenopus laevis (African clawed frog).